A 493-amino-acid polypeptide reads, in one-letter code: Probable cytosol aminopeptidase (493 aa).

Lys-257 and Asp-262 together coordinate Mn(2+). Residue Lys-269 is part of the active site. Positions 281, 341, and 343 each coordinate Mn(2+). Arg-345 is a catalytic residue.

Belongs to the peptidase M17 family. Mn(2+) serves as cofactor.

It is found in the cytoplasm. It catalyses the reaction Release of an N-terminal amino acid, Xaa-|-Yaa-, in which Xaa is preferably Leu, but may be other amino acids including Pro although not Arg or Lys, and Yaa may be Pro. Amino acid amides and methyl esters are also readily hydrolyzed, but rates on arylamides are exceedingly low.. It carries out the reaction Release of an N-terminal amino acid, preferentially leucine, but not glutamic or aspartic acids.. Functionally, presumably involved in the processing and regular turnover of intracellular proteins. Catalyzes the removal of unsubstituted N-terminal amino acids from various peptides. The chain is Probable cytosol aminopeptidase from Synechococcus sp. (strain WH7803).